Reading from the N-terminus, the 605-residue chain is Elongation factor 4 (605 aa).

Positions 9–192 (NRIRNFCIIA…AIVQRIPAPA (184 aa)) constitute a tr-type G domain. Residues 21 to 26 (DHGKST) and 139 to 142 (NKID) each bind GTP.

It belongs to the TRAFAC class translation factor GTPase superfamily. Classic translation factor GTPase family. LepA subfamily.

The protein localises to the cell inner membrane. The catalysed reaction is GTP + H2O = GDP + phosphate + H(+). In terms of biological role, required for accurate and efficient protein synthesis under certain stress conditions. May act as a fidelity factor of the translation reaction, by catalyzing a one-codon backward translocation of tRNAs on improperly translocated ribosomes. Back-translocation proceeds from a post-translocation (POST) complex to a pre-translocation (PRE) complex, thus giving elongation factor G a second chance to translocate the tRNAs correctly. Binds to ribosomes in a GTP-dependent manner. This chain is Elongation factor 4, found in Pelodictyon phaeoclathratiforme (strain DSM 5477 / BU-1).